A 233-amino-acid chain; its full sequence is Orotidine 5'-phosphate decarboxylase (233 aa).

Substrate-binding positions include D9, K31, 58-67 (DLKLHDIPNT), T120, R182, Q191, G211, and R212. Catalysis depends on K60, which acts as the Proton donor.

The protein belongs to the OMP decarboxylase family. Type 1 subfamily. In terms of assembly, homodimer.

It carries out the reaction orotidine 5'-phosphate + H(+) = UMP + CO2. The protein operates within pyrimidine metabolism; UMP biosynthesis via de novo pathway; UMP from orotate: step 2/2. Functionally, catalyzes the decarboxylation of orotidine 5'-monophosphate (OMP) to uridine 5'-monophosphate (UMP). This Listeria innocua serovar 6a (strain ATCC BAA-680 / CLIP 11262) protein is Orotidine 5'-phosphate decarboxylase.